The chain runs to 633 residues: Phosphomethylpyrimidine synthase (633 aa).

Substrate-binding positions include Asn245, Met274, Tyr303, His339, 359–361, 400–403, and Glu439; these read SRG and DGLR. His443 is a Zn(2+) binding site. A substrate-binding site is contributed by Tyr466. Position 507 (His507) interacts with Zn(2+). Residues Cys587, Cys590, and Cys595 each contribute to the [4Fe-4S] cluster site.

It belongs to the ThiC family. In terms of assembly, homodimer. It depends on [4Fe-4S] cluster as a cofactor.

The enzyme catalyses 5-amino-1-(5-phospho-beta-D-ribosyl)imidazole + S-adenosyl-L-methionine = 4-amino-2-methyl-5-(phosphooxymethyl)pyrimidine + CO + 5'-deoxyadenosine + formate + L-methionine + 3 H(+). Its pathway is cofactor biosynthesis; thiamine diphosphate biosynthesis. Its function is as follows. Catalyzes the synthesis of the hydroxymethylpyrimidine phosphate (HMP-P) moiety of thiamine from aminoimidazole ribotide (AIR) in a radical S-adenosyl-L-methionine (SAM)-dependent reaction. The chain is Phosphomethylpyrimidine synthase from Neisseria meningitidis serogroup C / serotype 2a (strain ATCC 700532 / DSM 15464 / FAM18).